The primary structure comprises 298 residues: Junctional adhesion molecule B (298 aa).

Residues 1–28 form the signal peptide; sequence MARRSRHRLLLLLLRYLVVALGYHKAYG. Over 29 to 238 the chain is Extracellular; that stretch reads FSAPKDQQVV…RMQVDDLNIS (210 aa). Residues 32-127 form the Ig-like V-type domain; it reads PKDQQVVTAV…GQNLEEDTVT (96 aa). 2 disulfide bridges follow: Cys50/Cys109 and Cys155/Cys214. Asn98, Asn187, and Asn236 each carry an N-linked (GlcNAc...) asparagine glycan. Positions 134–238 constitute an Ig-like C2-type domain; that stretch reads PAVPSCEVPS…RMQVDDLNIS (105 aa). A helical transmembrane segment spans residues 239 to 259; the sequence is GIIAAVVVVALVISVCGLGVC. Residues 260 to 298 are Cytoplasmic-facing; sequence YAQRKGYFSKETSFQKSNSSSKATTMSENDFKHTKSFII.

It belongs to the immunoglobulin superfamily. As to expression, highly expressed in heart, placenta, lung, foreskin and lymph node. Prominently expressed on high endothelial venules and also present on the endothelia of other vessels (at protein level). Also expressed in the brain in the caudate nuclei.

The protein resides in the cell membrane. Its subcellular location is the cell junction. The protein localises to the tight junction. Its function is as follows. Junctional adhesion protein that mediates heterotypic cell-cell interactions with its cognate receptor JAM3 to regulate different cellular processes. Plays a role in homing and mobilization of hematopoietic stem and progenitor cells within the bone marrow. At the surface of bone marrow stromal cells, it contributes to the retention of the hematopoietic stem and progenitor cells expressing JAM3. Plays a central role in leukocytes extravasation by facilitating not only transmigration but also tethering and rolling of leukocytes along the endothelium. Tethering and rolling of leukocytes are dependent on the binding by JAM2 of the integrin alpha-4/beta-1. Plays a role in spermatogenesis where JAM2 and JAM3, which are respectively expressed by Sertoli and germ cells, mediate an interaction between both cell types and play an essential role in the anchorage of germ cells onto Sertoli cells and the assembly of cell polarity complexes during spermatid differentiation. Also functions as an inhibitory somatodendritic cue that prevents the myelination of non-axonal parts of neurons. During myogenesis, it is involved in myocyte fusion. May also play a role in angiogenesis. The sequence is that of Junctional adhesion molecule B from Homo sapiens (Human).